The chain runs to 85 residues: Mitochondrial import inner membrane translocase subunit TIM9 (85 aa).

The Twin CX3C motif signature appears at 35-59; it reads CFTDCVNDFTSKALSSREESCLEKC. 2 disulfides stabilise this stretch: cysteine 35–cysteine 59 and cysteine 39–cysteine 55.

This sequence belongs to the small Tim family. Heterohexamer; composed of 3 copies of TIM9 and 3 copies of TIM10, named soluble 70 kDa complex. Associates with the TIM22 complex, whose core is composed of TIM22 and TIM54. Interacts with the transmembrane regions of multi-pass transmembrane proteins in transit.

It is found in the mitochondrion inner membrane. Mitochondrial intermembrane chaperone that participates in the import and insertion of multi-pass transmembrane proteins into the mitochondrial inner membrane. Also required for the transfer of beta-barrel precursors from the TOM complex to the sorting and assembly machinery (SAM complex) of the outer membrane. Acts as a chaperone-like protein that protects the hydrophobic precursors from aggregation and guide them through the mitochondrial intermembrane space. The protein is Mitochondrial import inner membrane translocase subunit TIM9 (TIM9) of Yarrowia lipolytica (strain CLIB 122 / E 150) (Yeast).